Here is a 155-residue protein sequence, read N- to C-terminus: UPF0461 protein C5orf24 homolog (155 aa).

A compositionally biased stretch (polar residues) spans 1–10 (MMHPVASSNP). The tract at residues 1–20 (MMHPVASSNPAFCGPGKPSC) is disordered. Residue Ser37 is modified to Phosphoserine. The disordered stretch occupies residues 40-155 (SKYSHTVNHK…QQAFRCSSDA (116 aa)). Polar residues predominate over residues 57-70 (DPLNETHLQTTSGR). Lys75 is covalently cross-linked (Glycyl lysine isopeptide (Lys-Gly) (interchain with G-Cter in SUMO2)). The span at 80-92 (KKKNLNRSGKRGR) shows a compositional bias: basic residues. The segment covering 94–107 (SGTTKSAGYRTSTG) has biased composition (polar residues). A Phosphoserine modification is found at Ser121.

It belongs to the UPF0461 family.

This chain is UPF0461 protein C5orf24 homolog, found in Pongo abelii (Sumatran orangutan).